The sequence spans 359 residues: S-adenosylmethionine:tRNA ribosyltransferase-isomerase (359 aa).

Belongs to the QueA family. As to quaternary structure, monomer.

It is found in the cytoplasm. The enzyme catalyses 7-aminomethyl-7-carbaguanosine(34) in tRNA + S-adenosyl-L-methionine = epoxyqueuosine(34) in tRNA + adenine + L-methionine + 2 H(+). The protein operates within tRNA modification; tRNA-queuosine biosynthesis. Functionally, transfers and isomerizes the ribose moiety from AdoMet to the 7-aminomethyl group of 7-deazaguanine (preQ1-tRNA) to give epoxyqueuosine (oQ-tRNA). The polypeptide is S-adenosylmethionine:tRNA ribosyltransferase-isomerase (Colwellia psychrerythraea (strain 34H / ATCC BAA-681) (Vibrio psychroerythus)).